The sequence spans 647 residues: Threonine--tRNA ligase (647 aa).

Positions 1-61 (MINITFPDGA…TEDGSIEIVT (61 aa)) constitute a TGS domain. The catalytic stretch occupies residues 242–540 (DHRKLGKELD…LIENYKGAFP (299 aa)). Cys-336, His-387, and His-517 together coordinate Zn(2+).

Belongs to the class-II aminoacyl-tRNA synthetase family. As to quaternary structure, homodimer. It depends on Zn(2+) as a cofactor.

The protein resides in the cytoplasm. The enzyme catalyses tRNA(Thr) + L-threonine + ATP = L-threonyl-tRNA(Thr) + AMP + diphosphate + H(+). Its function is as follows. Catalyzes the attachment of threonine to tRNA(Thr) in a two-step reaction: L-threonine is first activated by ATP to form Thr-AMP and then transferred to the acceptor end of tRNA(Thr). Also edits incorrectly charged L-seryl-tRNA(Thr). The polypeptide is Threonine--tRNA ligase (Streptococcus pneumoniae serotype 19F (strain G54)).